Consider the following 291-residue polypeptide: Membrane protein insertase YidC (291 aa).

Residues 1–19 form the signal peptide; the sequence is MKKKALLPLLLGVMVFLAG. A lipid anchor (N-palmitoyl cysteine) is attached at Cys20. A lipid anchor (S-diacylglycerol cysteine) is attached at Cys20. The next 4 helical transmembrane spans lie at 56-76, 134-154, 170-190, and 211-231; these read YGIAIIVLVLVIRIILLPFML, ALGCLPVLIQMPVVMGLYFVL, WFNLIHPDIWITIIAGVLYFI, and MIVSPIMIIWISLSSASALGL. The disordered stretch occupies residues 266–291; it reads FKENNSNSNKKGKNTQVVSKNNKKKK.

Belongs to the OXA1/ALB3/YidC family. Type 2 subfamily.

It localises to the cell membrane. In terms of biological role, required for the insertion and/or proper folding and/or complex formation of integral membrane proteins into the membrane. Involved in integration of membrane proteins that insert both dependently and independently of the Sec translocase complex, as well as at least some lipoproteins. The polypeptide is Membrane protein insertase YidC (Staphylococcus haemolyticus (strain JCSC1435)).